The primary structure comprises 218 residues: Imidazole glycerol phosphate synthase subunit HisH (218 aa).

In terms of domain architecture, Glutamine amidotransferase type-1 spans 5–213 (RLAVIDYEAG…VEFVARCSPL (209 aa)). The Nucleophile role is filled by Cys83. Residues His188 and Glu190 contribute to the active site.

In terms of assembly, heterodimer of HisH and HisF.

Its subcellular location is the cytoplasm. The enzyme catalyses 5-[(5-phospho-1-deoxy-D-ribulos-1-ylimino)methylamino]-1-(5-phospho-beta-D-ribosyl)imidazole-4-carboxamide + L-glutamine = D-erythro-1-(imidazol-4-yl)glycerol 3-phosphate + 5-amino-1-(5-phospho-beta-D-ribosyl)imidazole-4-carboxamide + L-glutamate + H(+). The catalysed reaction is L-glutamine + H2O = L-glutamate + NH4(+). It participates in amino-acid biosynthesis; L-histidine biosynthesis; L-histidine from 5-phospho-alpha-D-ribose 1-diphosphate: step 5/9. In terms of biological role, IGPS catalyzes the conversion of PRFAR and glutamine to IGP, AICAR and glutamate. The HisH subunit catalyzes the hydrolysis of glutamine to glutamate and ammonia as part of the synthesis of IGP and AICAR. The resulting ammonia molecule is channeled to the active site of HisF. The protein is Imidazole glycerol phosphate synthase subunit HisH of Synechococcus sp. (strain JA-2-3B'a(2-13)) (Cyanobacteria bacterium Yellowstone B-Prime).